The sequence spans 428 residues: Histidinol dehydrogenase (428 aa).

Residues Y127, Q185, and N208 each coordinate NAD(+). Substrate-binding residues include S232, Q254, and H257. Zn(2+) is bound by residues Q254 and H257. Catalysis depends on proton acceptor residues E321 and H322. Positions 322, 355, 409, and 414 each coordinate substrate. D355 provides a ligand contact to Zn(2+). Zn(2+) is bound at residue H414.

This sequence belongs to the histidinol dehydrogenase family. Zn(2+) is required as a cofactor.

The enzyme catalyses L-histidinol + 2 NAD(+) + H2O = L-histidine + 2 NADH + 3 H(+). It functions in the pathway amino-acid biosynthesis; L-histidine biosynthesis; L-histidine from 5-phospho-alpha-D-ribose 1-diphosphate: step 9/9. Functionally, catalyzes the sequential NAD-dependent oxidations of L-histidinol to L-histidinaldehyde and then to L-histidine. In Pasteurella multocida (strain Pm70), this protein is Histidinol dehydrogenase.